The sequence spans 197 residues: uncharacterized protein (197 aa).

Residues 103–123 (LAIVLPVLANLIMCAMLAWYL) traverse the membrane as a helical segment.

The protein localises to the host membrane. This is an uncharacterized protein from Equus caballus (Horse).